A 63-amino-acid chain; its full sequence is Putative F-box protein At1g47702 (63 aa).

The F-box domain maps to 23 to 63; the sequence is KDRISDLPNRILGKIIVKLPLDEAVRIMALSKRWKSIWDDN.

The polypeptide is Putative F-box protein At1g47702 (Arabidopsis thaliana (Mouse-ear cress)).